An 881-amino-acid chain; its full sequence is Probable inorganic carbon transporter subunit DabA (881 aa).

C399, D401, H585, and C600 together coordinate Zn(2+).

Belongs to the inorganic carbon transporter (TC 9.A.2) DabA family. Forms a complex with DabB. The cofactor is Zn(2+).

It is found in the cell membrane. Its function is as follows. Part of an energy-coupled inorganic carbon pump. In Geobacillus sp. (strain WCH70), this protein is Probable inorganic carbon transporter subunit DabA.